The primary structure comprises 547 residues: ATP-dependent RNA helicase ROK1 (547 aa).

The Q motif motif lies at 111–139 (DLITRFNLHPYLLANLKKNKYTDPTPIQC). The 183-residue stretch at 142–324 (IPTMLNGRDL…NSIMSTDPLR (183 aa)) folds into the Helicase ATP-binding domain. 155-162 (APTGSGKT) contacts ATP. The short motif at 272 to 275 (DEAD) is the DEAD box element. A Helicase C-terminal domain is found at 336-498 (TVEQKLVYAG…EVPDWLNNLA (163 aa)). The segment at 511-547 (RPIKRKKISTQHALANNKKKRAKQQMKGLKKMKKDDE) is disordered. The span at 527-547 (NKKKRAKQQMKGLKKMKKDDE) shows a compositional bias: basic residues.

The protein belongs to the DEAD box helicase family. DDX52/ROK1 subfamily. In terms of assembly, interacts with the U3 snoRNA and is associated with the 90S and 40S pre-ribosomes.

The protein localises to the nucleus. Its subcellular location is the nucleolus. It carries out the reaction ATP + H2O = ADP + phosphate + H(+). ATP-dependent RNA helicase involved in 40S ribosomal subunit biogenesis. Required for the processing and cleavage of 35S pre-rRNA at sites A0, A1, and A2, leading to mature 18S rRNA. The chain is ATP-dependent RNA helicase ROK1 (ROK1) from Yarrowia lipolytica (strain CLIB 122 / E 150) (Yeast).